The sequence spans 274 residues: MLPTKQAACSFINVAFSYNELPLIRELSFSVYEGEYVCIVGHNGSGKSTISKLLTGLLKPQAGEIKIFGKTVDFDNVSYLRNNIGIIFQNPDNQFIGITVEDDIAFGLENKCFSRQKIKAIIDEVTLQTQTDGFIKQEPHNLSGGQKQRVAIASVLALNPAIIIFDESTAMLDPKAKKTIKQFMVKLAKQGKCVISITHDMEEVTKADKVLVMNEGKLIKQGKPVEVFTSEQELQKIRLDIPFSLSLSTKIRGITSTIDYQTLIKSIAKLWKKR.

The region spanning 9–240 is the ABC transporter domain; sequence CSFINVAFSY…EQELQKIRLD (232 aa). An ATP-binding site is contributed by 41–48; sequence GHNGSGKS.

It belongs to the ABC transporter superfamily. Energy-coupling factor EcfA family. As to quaternary structure, forms a stable energy-coupling factor (ECF) transporter complex composed of 2 membrane-embedded substrate-binding proteins (S component), 2 ATP-binding proteins (A component) and 2 transmembrane proteins (T component).

It is found in the cell membrane. ATP-binding (A) component of a common energy-coupling factor (ECF) ABC-transporter complex. Unlike classic ABC transporters this ECF transporter provides the energy necessary to transport a number of different substrates. This Mycoplasma genitalium (strain ATCC 33530 / DSM 19775 / NCTC 10195 / G37) (Mycoplasmoides genitalium) protein is Energy-coupling factor transporter ATP-binding protein EcfA1.